Consider the following 127-residue polypeptide: Fluoride-specific ion channel FluC (127 aa).

4 helical membrane passes run 4–24 (LLLA…LLSM), 35–55 (LGTL…FAWF), 71–91 (TGFC…VFLL), and 103–123 (VFVN…LFSA). Positions 75 and 78 each coordinate Na(+).

It belongs to the fluoride channel Fluc/FEX (TC 1.A.43) family.

Its subcellular location is the cell inner membrane. The enzyme catalyses fluoride(in) = fluoride(out). Its activity is regulated as follows. Na(+) is not transported, but it plays an essential structural role and its presence is essential for fluoride channel function. Fluoride-specific ion channel. Important for reducing fluoride concentration in the cell, thus reducing its toxicity. The sequence is that of Fluoride-specific ion channel FluC from Escherichia coli (strain ATCC 8739 / DSM 1576 / NBRC 3972 / NCIMB 8545 / WDCM 00012 / Crooks).